The chain runs to 267 residues: NAD kinase (267 aa).

The Proton acceptor role is filled by Asp45. NAD(+) is bound by residues 45–46 (DG), 123–124 (NE), Arg149, Asp151, Ala186, and Asn226.

The protein belongs to the NAD kinase family. The cofactor is a divalent metal cation.

It is found in the cytoplasm. It carries out the reaction NAD(+) + ATP = ADP + NADP(+) + H(+). Its function is as follows. Involved in the regulation of the intracellular balance of NAD and NADP, and is a key enzyme in the biosynthesis of NADP. Catalyzes specifically the phosphorylation on 2'-hydroxyl of the adenosine moiety of NAD to yield NADP. The chain is NAD kinase from Shouchella clausii (strain KSM-K16) (Alkalihalobacillus clausii).